The primary structure comprises 115 residues: MNLLIIITINITLSFILISIAFWLPQMNLYSEKANPYECGFDPTSSARLPFSMKFFLVAITFLLFDLEIALLLPLPWAIQTTNTTTMMATAFILVTILALGLSYEWTQKGLEWTE.

Transmembrane regions (helical) follow at residues 3–23, 55–75, and 86–106; these read LLII…IAFW, FFLV…LLPL, and TMMA…SYEW.

This sequence belongs to the complex I subunit 3 family. As to quaternary structure, core subunit of respiratory chain NADH dehydrogenase (Complex I) which is composed of 45 different subunits. Interacts with TMEM186. Interacts with TMEM242.

It is found in the mitochondrion inner membrane. The catalysed reaction is a ubiquinone + NADH + 5 H(+)(in) = a ubiquinol + NAD(+) + 4 H(+)(out). Functionally, core subunit of the mitochondrial membrane respiratory chain NADH dehydrogenase (Complex I) which catalyzes electron transfer from NADH through the respiratory chain, using ubiquinone as an electron acceptor. Essential for the catalytic activity of complex I. This Rattus norvegicus (Rat) protein is NADH-ubiquinone oxidoreductase chain 3.